Consider the following 187-residue polypeptide: Adenylate kinase (187 aa).

ATP is bound at residue 10 to 15; sequence GSGKGT. Positions 30 to 59 are NMP; that stretch reads STGDLLRAEVAAGSPLGLKAKEVMARGDLV. Residues T31, R36, 57 to 59, 85 to 88, and Q92 each bind AMP; these read DLV and GYPR. The segment at 126–136 is LID; the sequence is GRAKAEGREDD. R127 is an ATP binding site. R133 and R144 together coordinate AMP. An ATP-binding site is contributed by G172.

It belongs to the adenylate kinase family. As to quaternary structure, monomer.

It is found in the cytoplasm. The catalysed reaction is AMP + ATP = 2 ADP. It participates in purine metabolism; AMP biosynthesis via salvage pathway; AMP from ADP: step 1/1. Catalyzes the reversible transfer of the terminal phosphate group between ATP and AMP. Plays an important role in cellular energy homeostasis and in adenine nucleotide metabolism. This chain is Adenylate kinase, found in Xanthomonas axonopodis pv. citri (strain 306).